We begin with the raw amino-acid sequence, 481 residues long: uncharacterized protein (481 aa).

10 consecutive transmembrane segments (helical) span residues 30-50, 96-116, 154-174, 196-216, 220-240, 250-270, 311-331, 354-374, 391-411, and 424-444; these read TIII…FVQF, AIAL…FIGM, CMAV…FNSV, ISLV…IAII, LVPM…GMHI, IVQS…ALVS, MLGV…IILL, IGEF…YSSI, KPWL…FGAV, and VMAV…PIVW.

Belongs to the alanine or glycine:cation symporter (AGCS) (TC 2.A.25) family.

Its subcellular location is the cell inner membrane. This is an uncharacterized protein from Haemophilus influenzae (strain ATCC 51907 / DSM 11121 / KW20 / Rd).